Here is an 858-residue protein sequence, read N- to C-terminus: Taste receptor type 1 member 3 (858 aa).

Positions 1 to 20 (MPALAIMGLSLAAFLELGMG) are cleaved as a signal peptide. Topologically, residues 21-572 (ASLCLSQQFK…RPKFLAWGEP (552 aa)) are extracellular. Residue Asn58 is glycosylated (N-linked (GlcNAc...) asparagine; when associated with variant T-60). Residues Asn85, Asn130, Asn203, Asn264, Asn379, Asn387, Asn418, Asn439, and Asn482 are each glycosylated (N-linked (GlcNAc...) asparagine). A helical membrane pass occupies residues 573–593 (VVLSLLLLLCLVLGLALAALG). The Cytoplasmic segment spans residues 594–610 (LSVHHWDSPLVQASGGS). Residues 611–631 (QFCFGLICLGLFCLSVLLFPG) form a helical membrane-spanning segment. The Extracellular segment spans residues 632–644 (RPSSASCLAQQPM). The chain crosses the membrane as a helical span at residues 645–665 (AHLPLTGCLSTLFLQAAETFV). The Cytoplasmic segment spans residues 666–687 (ESELPLSWANWLCSYLRGLWAW). A helical membrane pass occupies residues 688 to 708 (LVVLLATFVEAALCAWYLIAF). Residues 709–735 (PPEVVTDWSVLPTEVLEHCHVRSWVSL) lie on the Extracellular side of the membrane. A helical transmembrane segment spans residues 736–756 (GLVHITNAMLAFLCFLGTFLV). Over 757–767 (QSQPGRYNRAR) the chain is Cytoplasmic. A helical membrane pass occupies residues 768-788 (GLTFAMLAYFITWVSFVPLLA). The Extracellular portion of the chain corresponds to 789–796 (NVQVAYQP). A helical membrane pass occupies residues 797–817 (AVQMGAILVCALGILVTFHLP). Residues 818-858 (KCYVLLWLPKLNTQEFFLGRNAKKAADENSGGGEAAQGHNE) lie on the Cytoplasmic side of the membrane.

Belongs to the G-protein coupled receptor 3 family. TAS1R subfamily. As to quaternary structure, forms homodimers or heterodimers with TAS1R1 and TAS1R2. The Thr-60 variant is predicted to introduce a novel N-linked glycosylation site at Asn-58. The addition of even a short carbohydrate group at Asn-58 is predicted to disrupt one of the contact surfaces required for stability of a dimer. Therefore a Thr-60 variant N-glycosylated at Asn-58 is predicted to be precluded from forming homodimers or heterodimers. Expressed in circumvallate, foliate and fungiform taste papillae as well as in taste buds on the palate. Also expressed in testis. Not expressed in brain, heart, kidney, liver or spleen. The topographic distribution in various taste papillae is different from those of other T1R members.

It is found in the cell membrane. Functionally, putative taste receptor. TAS1R1/TAS1R3 responds to the umami taste stimulus (the taste of monosodium glutamate) and also to most of the 20 standard L-amino acids, but not to their D-enantiomers or other compounds. TAS1R2/TAS1R3 recognizes diverse natural and synthetic sweeteners. TAS1R3 is essential for the recognition and response to the disaccharide trehalose. Sequence differences within and between species can significantly influence the selectivity and specificity of taste responses. The protein is Taste receptor type 1 member 3 (Tas1r3) of Mus musculus (Mouse).